Consider the following 214-residue polypeptide: NAD(P)H-quinone oxidoreductase subunit 5, chloroplastic (214 aa).

The next 2 membrane-spanning stretches (helical) occupy residues 84–104 (LFPL…GIPF) and 152–172 (SLAI…YSFF).

The protein belongs to the complex I subunit 5 family. As to quaternary structure, NDH is composed of at least 16 different subunits, 5 of which are encoded in the nucleus.

It localises to the plastid. The protein localises to the chloroplast thylakoid membrane. The catalysed reaction is a plastoquinone + NADH + (n+1) H(+)(in) = a plastoquinol + NAD(+) + n H(+)(out). It catalyses the reaction a plastoquinone + NADPH + (n+1) H(+)(in) = a plastoquinol + NADP(+) + n H(+)(out). Functionally, NDH shuttles electrons from NAD(P)H:plastoquinone, via FMN and iron-sulfur (Fe-S) centers, to quinones in the photosynthetic chain and possibly in a chloroplast respiratory chain. The immediate electron acceptor for the enzyme in this species is believed to be plastoquinone. Couples the redox reaction to proton translocation, and thus conserves the redox energy in a proton gradient. In Brachypodium sylvaticum (False brome), this protein is NAD(P)H-quinone oxidoreductase subunit 5, chloroplastic (ndhF).